Consider the following 267-residue polypeptide: 2-keto-3-deoxy-L-rhamnonate aldolase (267 aa).

His49 serves as the catalytic Proton acceptor. Gln151 is a substrate binding site. Glu153 contacts Mg(2+). Positions 178 and 179 each coordinate substrate. Asp179 is a Mg(2+) binding site.

This sequence belongs to the HpcH/HpaI aldolase family. KDR aldolase subfamily. In terms of assembly, homohexamer. Mg(2+) serves as cofactor.

It carries out the reaction 2-dehydro-3-deoxy-L-rhamnonate = (S)-lactaldehyde + pyruvate. In terms of biological role, catalyzes the reversible retro-aldol cleavage of 2-keto-3-deoxy-L-rhamnonate (KDR) to pyruvate and lactaldehyde. In Escherichia coli (strain UTI89 / UPEC), this protein is 2-keto-3-deoxy-L-rhamnonate aldolase.